We begin with the raw amino-acid sequence, 174 residues long: Translationally-controlled tumor protein homolog 1 (174 aa).

The region spanning 1–174 is the TCTP domain; it reads MRVFKDIVGY…FKDGLESVKY (174 aa).

The protein belongs to the TCTP family.

It localises to the cytoplasm. Its function is as follows. Involved in calcium binding and microtubule stabilization. This chain is Translationally-controlled tumor protein homolog 1, found in Dictyostelium discoideum (Social amoeba).